We begin with the raw amino-acid sequence, 193 residues long: MPHTPPAYPAASADHRPPSSPPAEPAGEAVFLHPGDWHFGDSQTRIRTLLGSCVSITLWHPQAKVGGMCHYLLAQRTPHRGESLSGRYGDEAMLLLLREILDTGLPLQEFQARLIGGASMLLSRERKLSHDVPSRNIQQARLMVKQLGLKLLAEDLGGNCPRMVLFDVASGNVWIKQSQEAELEQAPHTRTRK.

A disordered region spans residues 1–26 (MPHTPPAYPAASADHRPPSSPPAEPA).

This sequence belongs to the CheD family.

The catalysed reaction is L-glutaminyl-[protein] + H2O = L-glutamyl-[protein] + NH4(+). Its function is as follows. Probably deamidates glutamine residues to glutamate on methyl-accepting chemotaxis receptors (MCPs), playing an important role in chemotaxis. The polypeptide is Probable chemoreceptor glutamine deamidase CheD 1 (Chromobacterium violaceum (strain ATCC 12472 / DSM 30191 / JCM 1249 / CCUG 213 / NBRC 12614 / NCIMB 9131 / NCTC 9757 / MK)).